We begin with the raw amino-acid sequence, 361 residues long: Peptide chain release factor 1 (361 aa).

Q235 carries the N5-methylglutamine modification.

The protein belongs to the prokaryotic/mitochondrial release factor family. In terms of processing, methylated by PrmC. Methylation increases the termination efficiency of RF1.

The protein resides in the cytoplasm. Functionally, peptide chain release factor 1 directs the termination of translation in response to the peptide chain termination codons UAG and UAA. The sequence is that of Peptide chain release factor 1 from Xanthomonas campestris pv. campestris (strain B100).